The following is a 601-amino-acid chain: ATP-dependent RNA helicase DeaD (601 aa).

The Q motif motif lies at 6-34 (STFSFLGLNPFIIKSLSKMGYVKPSPIQA). Positions 37 to 208 (IPLLLEGRDV…KRFMKNPQEI (172 aa)) constitute a Helicase ATP-binding domain. 50 to 57 (AQTGSGKT) lines the ATP pocket. The DEAD box signature appears at 156-159 (DEAD). Positions 231 to 378 (KTDALIRFLE…EVQLPKIEVL (148 aa)) constitute a Helicase C-terminal domain. Basic and acidic residues predominate over residues 564-581 (SIFNKDKNNKRRFSDNRL). Positions 564-601 (SIFNKDKNNKRRFSDNRLNKSSSIKNETKSSFFRRKSV) are disordered. Residues 582–594 (NKSSSIKNETKSS) show a composition bias toward polar residues.

This sequence belongs to the DEAD box helicase family. DeaD/CsdA subfamily.

It localises to the cytoplasm. It catalyses the reaction ATP + H2O = ADP + phosphate + H(+). Functionally, DEAD-box RNA helicase involved in various cellular processes at low temperature, including ribosome biogenesis, mRNA degradation and translation initiation. The protein is ATP-dependent RNA helicase DeaD of Buchnera aphidicola subsp. Schizaphis graminum (strain Sg).